The following is a 360-amino-acid chain: Uroporphyrinogen decarboxylase (360 aa).

Substrate contacts are provided by residues 31-35 (RQAGR), aspartate 81, tyrosine 157, threonine 212, and histidine 333.

This sequence belongs to the uroporphyrinogen decarboxylase family. As to quaternary structure, homodimer.

It localises to the cytoplasm. It carries out the reaction uroporphyrinogen III + 4 H(+) = coproporphyrinogen III + 4 CO2. It participates in porphyrin-containing compound metabolism; protoporphyrin-IX biosynthesis; coproporphyrinogen-III from 5-aminolevulinate: step 4/4. Its function is as follows. Catalyzes the decarboxylation of four acetate groups of uroporphyrinogen-III to yield coproporphyrinogen-III. This is Uroporphyrinogen decarboxylase from Herminiimonas arsenicoxydans.